The sequence spans 358 residues: Protein RecA (358 aa).

67-74 (GPESSGKT) provides a ligand contact to ATP.

The protein belongs to the RecA family.

It localises to the cytoplasm. Its function is as follows. Can catalyze the hydrolysis of ATP in the presence of single-stranded DNA, the ATP-dependent uptake of single-stranded DNA by duplex DNA, and the ATP-dependent hybridization of homologous single-stranded DNAs. It interacts with LexA causing its activation and leading to its autocatalytic cleavage. This Xenorhabdus bovienii (Xenorhabdus nematophila subsp. bovienii) protein is Protein RecA.